The following is a 590-amino-acid chain: UvrABC system protein C (590 aa).

In terms of domain architecture, GIY-YIG spans 14–91 (DQPGCYLMKD…IKKYDPKYNV (78 aa)). The UVR domain maps to 196–231 (NEIKKELEAKMAEAAEKLEFERAKEFRDQLAHIEST).

It belongs to the UvrC family. In terms of assembly, interacts with UvrB in an incision complex.

The protein resides in the cytoplasm. Its function is as follows. The UvrABC repair system catalyzes the recognition and processing of DNA lesions. UvrC both incises the 5' and 3' sides of the lesion. The N-terminal half is responsible for the 3' incision and the C-terminal half is responsible for the 5' incision. In Bacillus velezensis (strain DSM 23117 / BGSC 10A6 / LMG 26770 / FZB42) (Bacillus amyloliquefaciens subsp. plantarum), this protein is UvrABC system protein C.